A 64-amino-acid polypeptide reads, in one-letter code: DNA gyrase inhibitor YacG (64 aa).

4 residues coordinate Zn(2+): cysteine 9, cysteine 12, cysteine 28, and cysteine 32. Residues 45–64 (KRIPSSGDLSESDDWSEEQK) are disordered. Residues 54–64 (SESDDWSEEQK) show a composition bias toward acidic residues.

Belongs to the DNA gyrase inhibitor YacG family. In terms of assembly, interacts with GyrB. Zn(2+) is required as a cofactor.

Its function is as follows. Inhibits all the catalytic activities of DNA gyrase by preventing its interaction with DNA. Acts by binding directly to the C-terminal domain of GyrB, which probably disrupts DNA binding by the gyrase. The polypeptide is DNA gyrase inhibitor YacG (Citrobacter koseri (strain ATCC BAA-895 / CDC 4225-83 / SGSC4696)).